The primary structure comprises 264 residues: uncharacterized protein (264 aa).

Residues 7-27 (LTLGICLVLLIILIVGYVIMT) traverse the membrane as a helical segment.

The protein belongs to the staphylococcal tandem lipoprotein family.

It is found in the cell membrane. This is an uncharacterized protein from Staphylococcus aureus (strain MRSA252).